Here is a 171-residue protein sequence, read N- to C-terminus: Crossover junction endodeoxyribonuclease RuvC (171 aa).

Active-site residues include Asp-7, Glu-74, and Asp-147. Positions 7, 74, and 147 each coordinate Mg(2+).

It belongs to the RuvC family. As to quaternary structure, homodimer which binds Holliday junction (HJ) DNA. The HJ becomes 2-fold symmetrical on binding to RuvC with unstacked arms; it has a different conformation from HJ DNA in complex with RuvA. In the full resolvosome a probable DNA-RuvA(4)-RuvB(12)-RuvC(2) complex forms which resolves the HJ. It depends on Mg(2+) as a cofactor.

The protein resides in the cytoplasm. The enzyme catalyses Endonucleolytic cleavage at a junction such as a reciprocal single-stranded crossover between two homologous DNA duplexes (Holliday junction).. The RuvA-RuvB-RuvC complex processes Holliday junction (HJ) DNA during genetic recombination and DNA repair. Endonuclease that resolves HJ intermediates. Cleaves cruciform DNA by making single-stranded nicks across the HJ at symmetrical positions within the homologous arms, yielding a 5'-phosphate and a 3'-hydroxyl group; requires a central core of homology in the junction. The consensus cleavage sequence is 5'-(A/T)TT(C/G)-3'. Cleavage occurs on the 3'-side of the TT dinucleotide at the point of strand exchange. HJ branch migration catalyzed by RuvA-RuvB allows RuvC to scan DNA until it finds its consensus sequence, where it cleaves and resolves the cruciform DNA. This is Crossover junction endodeoxyribonuclease RuvC from Acidobacterium capsulatum (strain ATCC 51196 / DSM 11244 / BCRC 80197 / JCM 7670 / NBRC 15755 / NCIMB 13165 / 161).